Consider the following 110-residue polypeptide: Ribonuclease P protein component 1 (110 aa).

Belongs to the eukaryotic/archaeal RNase P protein component 1 family. In terms of assembly, consists of a catalytic RNA component and at least 4-5 protein subunits.

The protein localises to the cytoplasm. It catalyses the reaction Endonucleolytic cleavage of RNA, removing 5'-extranucleotides from tRNA precursor.. In terms of biological role, part of ribonuclease P, a protein complex that generates mature tRNA molecules by cleaving their 5'-ends. The protein is Ribonuclease P protein component 1 of Aeropyrum pernix (strain ATCC 700893 / DSM 11879 / JCM 9820 / NBRC 100138 / K1).